The chain runs to 475 residues: Serralysin G (475 aa).

A propeptide spanning residues M1–S14 is cleaved from the precursor. H186 contacts Zn(2+). Residue E187 is part of the active site. Zn(2+) contacts are provided by H190 and Y226. Ca(2+) is bound by residues R261, G263, T265, D293, G295, G296, D298, E337, G342, G344, D346, N351, N355, G359, G360, A361, G362, D364, G368, G370, G371, D373, G377, G378, A379, G380, D382, D391, D398, and D408. 2 Hemolysin-type calcium-binding repeats span residues I340–I357 and D358–L375.

The protein belongs to the peptidase M10B family. Requires Ca(2+) as cofactor. Zn(2+) is required as a cofactor.

The protein resides in the secreted. It carries out the reaction Preferential cleavage of bonds with hydrophobic residues in P1'.. In Dickeya chrysanthemi (Pectobacterium chrysanthemi), this protein is Serralysin G (prtG).